The primary structure comprises 75 residues: Protein CYSTEINE-RICH TRANSMEMBRANE MODULE 5 (75 aa).

A disordered region spans residues 1–29 (MSQYSQNQYAGAYPTPPVSTGPYVAPPPL). Pro residues predominate over residues 14 to 29 (PTPPVSTGPYVAPPPL). A helical transmembrane segment spans residues 52–69 (AADGFLKGCLATMLACCV).

The protein belongs to the CYSTM1 family. In terms of assembly, heterodimers. Interacts with CYSTM7 and WIH1/CYSTM13. In terms of tissue distribution, mostly expressed in roots, stems, rosette leaves and siliques and, to a lower extent, in flowers and cauline leaves.

The protein localises to the cell membrane. Its subcellular location is the nucleus. Its function is as follows. Involved in resistance to abiotic stress. This chain is Protein CYSTEINE-RICH TRANSMEMBRANE MODULE 5, found in Arabidopsis thaliana (Mouse-ear cress).